A 304-amino-acid chain; its full sequence is Sulfate adenylyltransferase subunit 2 (304 aa).

It belongs to the PAPS reductase family. CysD subfamily. In terms of assembly, heterodimer composed of CysD, the smaller subunit, and CysNC.

The catalysed reaction is sulfate + ATP + H(+) = adenosine 5'-phosphosulfate + diphosphate. Its pathway is sulfur metabolism; hydrogen sulfide biosynthesis; sulfite from sulfate: step 1/3. Its function is as follows. With CysN forms the ATP sulfurylase (ATPS) that catalyzes the adenylation of sulfate producing adenosine 5'-phosphosulfate (APS) and diphosphate, the first enzymatic step in sulfur assimilation pathway. APS synthesis involves the formation of a high-energy phosphoric-sulfuric acid anhydride bond driven by GTP hydrolysis by CysN coupled to ATP hydrolysis by CysD. In Xylella fastidiosa (strain Temecula1 / ATCC 700964), this protein is Sulfate adenylyltransferase subunit 2.